We begin with the raw amino-acid sequence, 425 residues long: MLDLKFIRENPDAVREAIRVKNVALDLDDLLQRDRDLVALKQRVEAMQTERNANAKLVPKASPEDRPGLIQKGKDLSEDLKALEPQLREQEDALKQLLLRVPNIPLPGVPVGKDEDDNVELRREGELPGFDFTPLDQVEILEKQGWADFERVARVSGSRSYLLKGDAALLEMAVLMFALDFLSQRGFTPLSTTALVRRETLVNSGHFPGDEESVYKLEGDELLLAGTAEVPINSLYAGEQLSADELPLTFAGFSAAFRREAGSAGRDVRGLIRVHEFRKVEQYVLCRADQEEGLKWFERLLSNAEGLLQALELPYRVIQNCTGDMGAGKVLMYDIETWVPSEQKYRETHSCSYLGDWQARRTGLRYRDEHGKLLYAHTLNNTGIASPRILVPLLENHQQADGTVRVPAALRPYLGGREVLGQPVR.

227 to 229 (TAE) serves as a coordination point for L-serine. ATP contacts are provided by residues 258-260 (RRE) and valine 274. Glutamate 281 lines the L-serine pocket. 347–350 (ETHS) contacts ATP. Residue threonine 382 coordinates L-serine.

It belongs to the class-II aminoacyl-tRNA synthetase family. Type-1 seryl-tRNA synthetase subfamily. As to quaternary structure, homodimer. The tRNA molecule binds across the dimer.

It is found in the cytoplasm. It carries out the reaction tRNA(Ser) + L-serine + ATP = L-seryl-tRNA(Ser) + AMP + diphosphate + H(+). The catalysed reaction is tRNA(Sec) + L-serine + ATP = L-seryl-tRNA(Sec) + AMP + diphosphate + H(+). The protein operates within aminoacyl-tRNA biosynthesis; selenocysteinyl-tRNA(Sec) biosynthesis; L-seryl-tRNA(Sec) from L-serine and tRNA(Sec): step 1/1. Catalyzes the attachment of serine to tRNA(Ser). Is also able to aminoacylate tRNA(Sec) with serine, to form the misacylated tRNA L-seryl-tRNA(Sec), which will be further converted into selenocysteinyl-tRNA(Sec). The polypeptide is Serine--tRNA ligase (Deinococcus radiodurans (strain ATCC 13939 / DSM 20539 / JCM 16871 / CCUG 27074 / LMG 4051 / NBRC 15346 / NCIMB 9279 / VKM B-1422 / R1)).